We begin with the raw amino-acid sequence, 760 residues long: Xaa-Pro dipeptidyl-peptidase (760 aa).

Active-site charge relay system residues include S349, D469, and H499.

The protein belongs to the peptidase S15 family. Homodimer.

It localises to the cytoplasm. The catalysed reaction is Hydrolyzes Xaa-Pro-|- bonds to release unblocked, N-terminal dipeptides from substrates including Ala-Pro-|-p-nitroanilide and (sequentially) Tyr-Pro-|-Phe-Pro-|-Gly-Pro-|-Ile.. Functionally, removes N-terminal dipeptides sequentially from polypeptides having unsubstituted N-termini provided that the penultimate residue is proline. The sequence is that of Xaa-Pro dipeptidyl-peptidase from Streptococcus pyogenes serotype M18 (strain MGAS8232).